A 407-amino-acid polypeptide reads, in one-letter code: Imidazolonepropionase (407 aa).

Fe(3+)-binding residues include histidine 74 and histidine 76. Zn(2+) contacts are provided by histidine 74 and histidine 76. Residues arginine 83, tyrosine 146, and histidine 179 each coordinate 4-imidazolone-5-propanoate. Tyrosine 146 contributes to the N-formimidoyl-L-glutamate binding site. Residue histidine 244 participates in Fe(3+) binding. Histidine 244 is a Zn(2+) binding site. Glutamine 247 serves as a coordination point for 4-imidazolone-5-propanoate. Fe(3+) is bound at residue aspartate 319. Aspartate 319 lines the Zn(2+) pocket. 2 residues coordinate N-formimidoyl-L-glutamate: asparagine 321 and glycine 323. Threonine 324 contributes to the 4-imidazolone-5-propanoate binding site.

Belongs to the metallo-dependent hydrolases superfamily. HutI family. Requires Zn(2+) as cofactor. Fe(3+) serves as cofactor.

Its subcellular location is the cytoplasm. The enzyme catalyses 4-imidazolone-5-propanoate + H2O = N-formimidoyl-L-glutamate. The protein operates within amino-acid degradation; L-histidine degradation into L-glutamate; N-formimidoyl-L-glutamate from L-histidine: step 3/3. Its function is as follows. Catalyzes the hydrolytic cleavage of the carbon-nitrogen bond in imidazolone-5-propanoate to yield N-formimidoyl-L-glutamate. It is the third step in the universal histidine degradation pathway. The chain is Imidazolonepropionase from Salmonella paratyphi C (strain RKS4594).